Consider the following 227-residue polypeptide: ATP synthase F(0) complex subunit a (227 aa).

6 consecutive transmembrane segments (helical) span residues 9 to 29 (FASPSYLGIPLIAIAIALPWV), 69 to 89 (WALLLASLMIFLITINMLGLL), 98 to 118 (QLSLNMGFAVPLWLATVIIGM), 132 to 152 (EGTPIPLIPVLIIIETISLFI), 165 to 185 (LTAGHLLIQLIATAVFVLMPM), and 190 to 210 (AILTATVLFLLTLLEVAVAMI).

It belongs to the ATPase A chain family. Component of the ATP synthase complex composed at least of ATP5F1A/subunit alpha, ATP5F1B/subunit beta, ATP5MC1/subunit c (homooctomer), MT-ATP6/subunit a, MT-ATP8/subunit 8, ATP5ME/subunit e, ATP5MF/subunit f, ATP5MG/subunit g, ATP5MK/subunit k, ATP5MJ/subunit j, ATP5F1C/subunit gamma, ATP5F1D/subunit delta, ATP5F1E/subunit epsilon, ATP5PF/subunit F6, ATP5PB/subunit b, ATP5PD/subunit d, ATP5PO/subunit OSCP. ATP synthase complex consists of a soluble F(1) head domain (subunits alpha(3) and beta(3)) - the catalytic core - and a membrane F(0) domain - the membrane proton channel (subunits c, a, 8, e, f, g, k and j). These two domains are linked by a central stalk (subunits gamma, delta, and epsilon) rotating inside the F1 region and a stationary peripheral stalk (subunits F6, b, d, and OSCP). Interacts with DNAJC30; interaction is direct.

Its subcellular location is the mitochondrion inner membrane. The catalysed reaction is H(+)(in) = H(+)(out). In terms of biological role, subunit a, of the mitochondrial membrane ATP synthase complex (F(1)F(0) ATP synthase or Complex V) that produces ATP from ADP in the presence of a proton gradient across the membrane which is generated by electron transport complexes of the respiratory chain. ATP synthase complex consist of a soluble F(1) head domain - the catalytic core - and a membrane F(1) domain - the membrane proton channel. These two domains are linked by a central stalk rotating inside the F(1) region and a stationary peripheral stalk. During catalysis, ATP synthesis in the catalytic domain of F(1) is coupled via a rotary mechanism of the central stalk subunits to proton translocation. With the subunit c (ATP5MC1), forms the proton-conducting channel in the F(0) domain, that contains two crucial half-channels (inlet and outlet) that facilitate proton movement from the mitochondrial intermembrane space (IMS) into the matrix. Protons are taken up via the inlet half-channel and released through the outlet half-channel, following a Grotthuss mechanism. The protein is ATP synthase F(0) complex subunit a of Carassius auratus (Goldfish).